The following is a 269-amino-acid chain: MTTAPVVSPSLSRLHSAPASPFPKAPVGSGAGVAFPARPYGPSLRLRSAVMAASGVGGNGSPMAPEESAVSSRLGEVKRVTKETNVHVKINLDGTGVANSSTGIPFLDHMLDQLASHGLFDVYVKATGDTHIDDHHSNEDIALAIGTALLQALGDRKGINRFGHFTAPLDEAAVEVILDLSGRPHLSCGLSIPTERVGTYDTQLVEHFFQSLVNTSGMTLHIRQLAGNNSHHIIEATFKAFARALRQATEYDLRRRGTIPSSKGVLSRS.

The N-terminal 51 residues, Met1 to Met51, are a transit peptide targeting the chloroplast. Substrate is bound by residues Glu83, His109–His117, His135–Glu139, Arg161, and Arg183. 4 residues coordinate Mn(2+): His109, His135, His136, and Glu139. Mn(2+) is bound by residues His207, His231, His232, and Glu235. Residues His231–Lys239 and Ser261–Lys263 contribute to the substrate site.

This sequence belongs to the imidazoleglycerol-phosphate dehydratase family. Requires Mn(2+) as cofactor.

It is found in the plastid. The protein resides in the chloroplast. It catalyses the reaction D-erythro-1-(imidazol-4-yl)glycerol 3-phosphate = 3-(imidazol-4-yl)-2-oxopropyl phosphate + H2O. The protein operates within amino-acid biosynthesis; L-histidine biosynthesis; L-histidine from 5-phospho-alpha-D-ribose 1-diphosphate: step 6/9. This chain is Imidazoleglycerol-phosphate dehydratase 3, chloroplastic, found in Triticum aestivum (Wheat).